A 291-amino-acid polypeptide reads, in one-letter code: MQQIHRLERKLLRATAEAIRDFDLVSQGDRIMVAVSGGKDSYTLLHLLMRLRERAPIDFDLVAVNLDQGQPGFPAQVVEDHLRSVGVPYRMLQRDTYSVVRRLVPEGKTTCPVCSRLRRGVLYNAAVEMGCTKIALGHHRDDLVETLLLSALYSGALKSMPPKLRSRDGRNVVVRPLCYAAEEDVAAFAEAMRFPIVPCDLCGSQPNLRRKRVKRLLAELSAEHPAVKGNLLHALAHVVPSHLLDRDLHRQLADATGRDPWLDAEDEEAEDCGEPPAGDGVVSLGGARGGR.

The PP-loop motif motif lies at 36-41 (SGGKDS). [4Fe-4S] cluster-binding residues include Cys111, Cys114, and Cys202. The interval 258-291 (RDPWLDAEDEEAEDCGEPPAGDGVVSLGGARGGR) is disordered. The segment covering 262-273 (LDAEDEEAEDCG) has biased composition (acidic residues).

The protein belongs to the TtcA family. In terms of assembly, homodimer. It depends on Mg(2+) as a cofactor. [4Fe-4S] cluster is required as a cofactor.

It localises to the cytoplasm. It catalyses the reaction cytidine(32) in tRNA + S-sulfanyl-L-cysteinyl-[cysteine desulfurase] + AH2 + ATP = 2-thiocytidine(32) in tRNA + L-cysteinyl-[cysteine desulfurase] + A + AMP + diphosphate + H(+). It participates in tRNA modification. Catalyzes the ATP-dependent 2-thiolation of cytidine in position 32 of tRNA, to form 2-thiocytidine (s(2)C32). The sulfur atoms are provided by the cysteine/cysteine desulfurase (IscS) system. The polypeptide is tRNA-cytidine(32) 2-sulfurtransferase (Anaeromyxobacter dehalogenans (strain 2CP-1 / ATCC BAA-258)).